A 296-amino-acid chain; its full sequence is 4-diphosphocytidyl-2-C-methyl-D-erythritol kinase (296 aa).

K22 is an active-site residue. 105-115 is a binding site for ATP; the sequence is PMGGGLGGGSS. D147 is an active-site residue.

It belongs to the GHMP kinase family. IspE subfamily.

The enzyme catalyses 4-CDP-2-C-methyl-D-erythritol + ATP = 4-CDP-2-C-methyl-D-erythritol 2-phosphate + ADP + H(+). The protein operates within isoprenoid biosynthesis; isopentenyl diphosphate biosynthesis via DXP pathway; isopentenyl diphosphate from 1-deoxy-D-xylulose 5-phosphate: step 3/6. Catalyzes the phosphorylation of the position 2 hydroxy group of 4-diphosphocytidyl-2C-methyl-D-erythritol. This Photobacterium profundum (strain SS9) protein is 4-diphosphocytidyl-2-C-methyl-D-erythritol kinase.